The chain runs to 446 residues: MAKKLFIETHGCQMNEYDSSRMADLLGEHQALEVTENAAEADVILLNTCSIREKAQEKVFSKLGMWRELKQQNPDLVIGVGGCVASQEGAAIRERAPYVDVVFGPQTLHRLPEMIDAARSTRKPQVDVSFPEIEKFDRLPEPRVDGPTAFVSVMEGCSKYCSFCVVPYTRGEEVSRPFDDVIAEVIHLAENGVREVTLLGQNVNGFRGLTHDGRLADFAELLRVVAAVDGIERIRYTTSHPLEFSDALIQAHAEVPELVKFIHLPVQSGSDRVLAAMKRNHTVLEYKSRIRKLKAAVPDICISSDFIVGFPGETEKDFEQTMKLVEDVGFDFSFSFIYSARPGTPAADLADDLPEEVKKQRLQILQSRIHQQGYEISRRMVGSTQRILVTDFSKKDPGMLQGRTENNRIVNFRCDNPRLIGQFAQVHIDDALPHSLRGTLIDSTLH.

The 118-residue stretch at 3–120 (KKLFIETHGC…LPEMIDAARS (118 aa)) folds into the MTTase N-terminal domain. Residues Cys-12, Cys-49, Cys-83, Cys-157, Cys-161, and Cys-164 each coordinate [4Fe-4S] cluster. Residues 143–375 (RVDGPTAFVS…QSRIHQQGYE (233 aa)) form the Radical SAM core domain. The 65-residue stretch at 378–442 (RRMVGSTQRI…PHSLRGTLID (65 aa)) folds into the TRAM domain.

This sequence belongs to the methylthiotransferase family. MiaB subfamily. In terms of assembly, monomer. [4Fe-4S] cluster is required as a cofactor.

Its subcellular location is the cytoplasm. It catalyses the reaction N(6)-dimethylallyladenosine(37) in tRNA + (sulfur carrier)-SH + AH2 + 2 S-adenosyl-L-methionine = 2-methylsulfanyl-N(6)-dimethylallyladenosine(37) in tRNA + (sulfur carrier)-H + 5'-deoxyadenosine + L-methionine + A + S-adenosyl-L-homocysteine + 2 H(+). In terms of biological role, catalyzes the methylthiolation of N6-(dimethylallyl)adenosine (i(6)A), leading to the formation of 2-methylthio-N6-(dimethylallyl)adenosine (ms(2)i(6)A) at position 37 in tRNAs that read codons beginning with uridine. This chain is tRNA-2-methylthio-N(6)-dimethylallyladenosine synthase, found in Pseudomonas aeruginosa (strain UCBPP-PA14).